The chain runs to 432 residues: Proline--tRNA ligase (432 aa).

This sequence belongs to the class-II aminoacyl-tRNA synthetase family. ProS type 2 subfamily. Homodimer.

It is found in the cytoplasm. It catalyses the reaction tRNA(Pro) + L-proline + ATP = L-prolyl-tRNA(Pro) + AMP + diphosphate. In terms of biological role, catalyzes the attachment of proline to tRNA(Pro) in a two-step reaction: proline is first activated by ATP to form Pro-AMP and then transferred to the acceptor end of tRNA(Pro). The polypeptide is Proline--tRNA ligase (Rickettsia prowazekii (strain Madrid E)).